Reading from the N-terminus, the 255-residue chain is 5'-nucleotidase SurE (255 aa).

Residues Asp8, Asp9, Ser39, and Asn91 each coordinate a divalent metal cation.

Belongs to the SurE nucleotidase family. The cofactor is a divalent metal cation.

It is found in the cytoplasm. The catalysed reaction is a ribonucleoside 5'-phosphate + H2O = a ribonucleoside + phosphate. Nucleotidase that shows phosphatase activity on nucleoside 5'-monophosphates. The sequence is that of 5'-nucleotidase SurE from Acinetobacter baumannii (strain SDF).